Consider the following 242-residue polypeptide: 2-C-methyl-D-erythritol 4-phosphate cytidylyltransferase (242 aa).

It belongs to the IspD/TarI cytidylyltransferase family. IspD subfamily.

The catalysed reaction is 2-C-methyl-D-erythritol 4-phosphate + CTP + H(+) = 4-CDP-2-C-methyl-D-erythritol + diphosphate. Its pathway is isoprenoid biosynthesis; isopentenyl diphosphate biosynthesis via DXP pathway; isopentenyl diphosphate from 1-deoxy-D-xylulose 5-phosphate: step 2/6. In terms of biological role, catalyzes the formation of 4-diphosphocytidyl-2-C-methyl-D-erythritol from CTP and 2-C-methyl-D-erythritol 4-phosphate (MEP). The sequence is that of 2-C-methyl-D-erythritol 4-phosphate cytidylyltransferase from Vesicomyosocius okutanii subsp. Calyptogena okutanii (strain HA).